A 485-amino-acid chain; its full sequence is Ribosomal protein uS12 methylthiotransferase RimO (485 aa).

The MTTase N-terminal domain maps to 19-135 (VKVGFISLGC…IGEVVAGILA (117 aa)). The [4Fe-4S] cluster site is built by Cys-28, Cys-64, Cys-98, Cys-172, Cys-176, and Cys-179. The 230-residue stretch at 158 to 387 (ATPGYTAYLK…MEVQQEIARR (230 aa)) folds into the Radical SAM core domain. Residues 390 to 461 (QLQVGRELEV…DYDLLGEATE (72 aa)) enclose the TRAM domain.

This sequence belongs to the methylthiotransferase family. RimO subfamily. The cofactor is [4Fe-4S] cluster.

It is found in the cytoplasm. It catalyses the reaction L-aspartate(89)-[ribosomal protein uS12]-hydrogen + (sulfur carrier)-SH + AH2 + 2 S-adenosyl-L-methionine = 3-methylsulfanyl-L-aspartate(89)-[ribosomal protein uS12]-hydrogen + (sulfur carrier)-H + 5'-deoxyadenosine + L-methionine + A + S-adenosyl-L-homocysteine + 2 H(+). Functionally, catalyzes the methylthiolation of an aspartic acid residue of ribosomal protein uS12. The protein is Ribosomal protein uS12 methylthiotransferase RimO of Symbiobacterium thermophilum (strain DSM 24528 / JCM 14929 / IAM 14863 / T).